The sequence spans 474 residues: 3-isopropylmalate dehydratase large subunit (474 aa).

Residues cysteine 352, cysteine 413, and cysteine 416 each coordinate [4Fe-4S] cluster.

It belongs to the aconitase/IPM isomerase family. LeuC type 1 subfamily. In terms of assembly, heterodimer of LeuC and LeuD. [4Fe-4S] cluster is required as a cofactor.

The catalysed reaction is (2R,3S)-3-isopropylmalate = (2S)-2-isopropylmalate. The protein operates within amino-acid biosynthesis; L-leucine biosynthesis; L-leucine from 3-methyl-2-oxobutanoate: step 2/4. Functionally, catalyzes the isomerization between 2-isopropylmalate and 3-isopropylmalate, via the formation of 2-isopropylmaleate. In Pseudomonas savastanoi pv. phaseolicola (strain 1448A / Race 6) (Pseudomonas syringae pv. phaseolicola (strain 1448A / Race 6)), this protein is 3-isopropylmalate dehydratase large subunit.